We begin with the raw amino-acid sequence, 220 residues long: Transmembrane emp24 domain-containing protein 1 (220 aa).

A signal peptide spans 1–19 (MAWSSSFLFIVLPLAAAVA). Over 20-187 (VQPQDTELTF…LQDSNLERVN (168 aa)) the chain is Extracellular. Positions 36-118 (QECFYQTTLY…EKLVFFELIF (83 aa)) constitute a GOLD domain. A coiled-coil region spans residues 138-164 (ELLDIKLEDIKESIESVKSRLERSIQM). Residues 188–208 (FWSAINVGVLVTVAFLQVYML) traverse the membrane as a helical segment. Over 209-220 (KSLFDDKRKIRT) the chain is Cytoplasmic. A COPII vesicle coat-binding motif is present at residues 211–212 (LF). Positions 211-220 (LFDDKRKIRT) match the COPI vesicle coat-binding motif.

It belongs to the EMP24/GP25L family. In terms of assembly, homodimer in endoplasmic reticulum, endoplasmic reticulum-Golgi intermediate compartment and cis-Golgi network. Interacts with IL1RL1. Interacts with RNF26; this interaction is important to modulate innate immune signaling through the cGAS-STING pathway.

The protein localises to the cell membrane. Its subcellular location is the endoplasmic reticulum membrane. The protein resides in the golgi apparatus. It localises to the cis-Golgi network membrane. It is found in the endoplasmic reticulum-Golgi intermediate compartment membrane. Functionally, potential role in vesicular protein trafficking, mainly in the early secretory pathway. May act as a cargo receptor at the lumenal side for incorporation of secretory cargo molecules into transport vesicles and may be involved in vesicle coat formation at the cytoplasmic side. Plays a positive role in IL-33-mediated IL-8 and IL-6 production by interacting with interleukin-33 receptor IL1RL1. Plays also a role in the modulation of innate immune signaling through the cGAS-STING pathway by interacting with RNF26. This chain is Transmembrane emp24 domain-containing protein 1 (tmed1), found in Xenopus tropicalis (Western clawed frog).